The following is a 366-amino-acid chain: NADH-quinone oxidoreductase subunit D (366 aa).

This sequence belongs to the complex I 49 kDa subunit family. NDH-1 is composed of 14 different subunits. Subunits NuoB, C, D, E, F, and G constitute the peripheral sector of the complex.

The protein localises to the cell membrane. It catalyses the reaction a quinone + NADH + 5 H(+)(in) = a quinol + NAD(+) + 4 H(+)(out). Functionally, NDH-1 shuttles electrons from NADH, via FMN and iron-sulfur (Fe-S) centers, to quinones in the respiratory chain. The immediate electron acceptor for the enzyme in this species is believed to be a menaquinone. Couples the redox reaction to proton translocation (for every two electrons transferred, four hydrogen ions are translocated across the cytoplasmic membrane), and thus conserves the redox energy in a proton gradient. This Bacillus thuringiensis subsp. konkukian (strain 97-27) protein is NADH-quinone oxidoreductase subunit D.